Here is a 518-residue protein sequence, read N- to C-terminus: Chromosomal replication initiator protein DnaA (518 aa).

Positions 1–72 (MNEFWQHCSA…DLARDFWHSP (72 aa)) are domain I, interacts with DnaA modulators. The tract at residues 72-181 (PVDVQFVLDP…GESDSTYERS (110 aa)) is domain II. Positions 155 to 178 (AAARRTWRPGAAAQAAGGESDSTY) are disordered. Residues 182-398 (KLNPVLTFDN…GALRKILAYS (217 aa)) form a domain III, AAA+ region region. Residues G226, G228, K229, and T230 each contribute to the ATP site. The tract at residues 399–518 (KFHGREITIE…LHVLEQTLKG (120 aa)) is domain IV, binds dsDNA.

This sequence belongs to the DnaA family. Oligomerizes as a right-handed, spiral filament on DNA at oriC.

The protein resides in the cytoplasm. Functionally, plays an essential role in the initiation and regulation of chromosomal replication. ATP-DnaA binds to the origin of replication (oriC) to initiate formation of the DNA replication initiation complex once per cell cycle. Binds the DnaA box (a 9 base pair repeat at the origin) and separates the double-stranded (ds)DNA. Forms a right-handed helical filament on oriC DNA; dsDNA binds to the exterior of the filament while single-stranded (ss)DNA is stabiized in the filament's interior. The ATP-DnaA-oriC complex binds and stabilizes one strand of the AT-rich DNA unwinding element (DUE), permitting loading of DNA polymerase. After initiation quickly degrades to an ADP-DnaA complex that is not apt for DNA replication. Binds acidic phospholipids. The chain is Chromosomal replication initiator protein DnaA from Paraburkholderia phymatum (strain DSM 17167 / CIP 108236 / LMG 21445 / STM815) (Burkholderia phymatum).